Reading from the N-terminus, the 156-residue chain is NAD(P)H-quinone oxidoreductase subunit N (156 aa).

The protein belongs to the complex I NdhN subunit family. In terms of assembly, NDH-1 can be composed of about 15 different subunits; different subcomplexes with different compositions have been identified which probably have different functions.

The protein localises to the cellular thylakoid membrane. It carries out the reaction a plastoquinone + NADH + (n+1) H(+)(in) = a plastoquinol + NAD(+) + n H(+)(out). It catalyses the reaction a plastoquinone + NADPH + (n+1) H(+)(in) = a plastoquinol + NADP(+) + n H(+)(out). In terms of biological role, NDH-1 shuttles electrons from an unknown electron donor, via FMN and iron-sulfur (Fe-S) centers, to quinones in the respiratory and/or the photosynthetic chain. The immediate electron acceptor for the enzyme in this species is believed to be plastoquinone. Couples the redox reaction to proton translocation, and thus conserves the redox energy in a proton gradient. Cyanobacterial NDH-1 also plays a role in inorganic carbon-concentration. This chain is NAD(P)H-quinone oxidoreductase subunit N, found in Prochlorococcus marinus subsp. pastoris (strain CCMP1986 / NIES-2087 / MED4).